A 320-amino-acid chain; its full sequence is Delta(7)-sterol 5(6)-desaturase erg3C (320 aa).

The next 3 membrane-spanning stretches (helical) occupy residues V43–A63, S91–V111, and P127–I147. In terms of domain architecture, Fatty acid hydroxylase spans I134–S283. A Histidine box-1 motif is present at residues H148 to H152. The short motif at H161–H165 is the Histidine box-2 element. The helical transmembrane segment at Y224 to I244 threads the bilayer. Positions H259–H263 match the Histidine box-3 motif.

This sequence belongs to the sterol desaturase family. Requires Fe cation as cofactor.

Its subcellular location is the endoplasmic reticulum membrane. Its function is as follows. Delta(7)-sterol 5(6)-desaturase; part of the third module of ergosterol biosynthesis pathway that includes the late steps of the pathway. Erg3C is a minor delta(7)-sterol 5(6)-desaturase within the ergosterol pathway, erg3B being the major one. The third module or late pathway involves the ergosterol synthesis itself through consecutive reactions that mainly occur in the endoplasmic reticulum (ER) membrane. Firstly, the squalene synthase erg9 catalyzes the condensation of 2 farnesyl pyrophosphate moieties to form squalene, which is the precursor of all steroids. Squalene synthase is crucial for balancing the incorporation of farnesyl diphosphate (FPP) into sterol and nonsterol isoprene synthesis. Secondly, squalene is converted into lanosterol by the consecutive action of the squalene epoxidase erg1 and the lanosterol synthase erg7. Then, the delta(24)-sterol C-methyltransferase erg6 methylates lanosterol at C-24 to produce eburicol. Eburicol is the substrate of the sterol 14-alpha demethylase encoded by cyp51A and cyp51B, to yield 4,4,24-trimethyl ergosta-8,14,24(28)-trienol. The C-14 reductase erg24 then reduces the C14=C15 double bond which leads to 4,4-dimethylfecosterol. A sequence of further demethylations at C-4, involving the C-4 demethylation complex containing the C-4 methylsterol oxidases erg25A or erg25B, the sterol-4-alpha-carboxylate 3-dehydrogenase erg26 and the 3-keto-steroid reductase erg27, leads to the production of fecosterol via 4-methylfecosterol. The C-8 sterol isomerase erg2 then catalyzes the reaction which results in unsaturation at C-7 in the B ring of sterols and thus converts fecosterol to episterol. The sterol-C5-desaturase erg3B then catalyzes the introduction of a C-5 double bond in the B ring to produce 5-dehydroepisterol. The 2 other sterol-C5-desaturases, erg3A and erg3C, seem to be less important in ergosterol biosynthesis. The C-22 sterol desaturase erg5 further converts 5-dehydroepisterol into ergosta-5,7,22,24(28)-tetraen-3beta-ol by forming the C-22(23) double bond in the sterol side chain. Finally, ergosta-5,7,22,24(28)-tetraen-3beta-ol is substrate of the C-24(28) sterol reductases erg4A and erg4B to produce ergosterol. Possible alternative sterol biosynthetic pathways might exist from fecosterol to ergosterol, depending on the activities of the erg3 isoforms. This chain is Delta(7)-sterol 5(6)-desaturase erg3C, found in Aspergillus fumigatus (strain ATCC MYA-4609 / CBS 101355 / FGSC A1100 / Af293) (Neosartorya fumigata).